The chain runs to 3479 residues: Abnormal spindle-like microcephaly-associated protein homolog (3479 aa).

The disordered stretch occupies residues Met-1 to Thr-29. Phosphoserine occurs at positions 280, 283, 367, 392, 425, and 605. The 137-residue stretch at Lys-920–Gln-1056 folds into the Calponin-homology (CH) 1 domain. Residues Val-1057–Ser-1078 adopt a coiled-coil conformation. Ser-1103 bears the Phosphoserine mark. The 152-residue stretch at Ser-1110–Leu-1261 folds into the Calponin-homology (CH) 2 domain. IQ domains follow at residues Gln-1347–Gln-1378, Tyr-1393–Ser-1422, Leu-1582–Gln-1613, Met-1605–Ser-1634, Thr-1632–Lys-1661, Ile-1655–Lys-1684, Met-1728–Ser-1757, Gln-1751–Gln-1782, Val-1801–Lys-1830, Gln-1824–Lys-1853, Thr-1874–Lys-1903, Glu-1897–Gln-1928, Leu-1947–Gln-1978, Gln-1970–Gln-2001, Thr-2020–Thr-2049, Cys-2043–Gln-2074, Leu-2093–Lys-2124, Met-2116–Gln-2147, Leu-2239–Gln-2270, Met-2262–Gln-2293, Val-2311–Gln-2342, Met-2334–Gln-2365, Gln-2384–Gln-2415, Met-2407–Gln-2438, Gln-2533–Gln-2564, Gln-2627–Ser-2656, Arg-2668–Gln-2699, Met-2691–Gln-2722, Val-2741–Ala-2770, Gln-2817–Phe-2848, Gln-2862–Gln-2893, Ile-2912–Lys-2941, Ile-2935–Ala-2966, Lys-2957–Gln-2988, Arg-3032–Gln-3063, Phe-3082–His-3113, and Phe-3206–Ser-3237.

It localises to the cytoplasm. The protein resides in the cytoskeleton. The protein localises to the spindle. Its subcellular location is the nucleus. Probable role in mitotic spindle regulation and coordination of mitotic processes. May have a preferential role in regulating neurogenesis. In Macaca mulatta (Rhesus macaque), this protein is Abnormal spindle-like microcephaly-associated protein homolog (ASPM).